Here is a 250-residue protein sequence, read N- to C-terminus: MTVAAGIGYALVALGPSLSLFVSVISRKPFLILTVLSSTLLWLVSLIILSGLWRPFLPLKANVWWPYALLVITSVCFQEGLRFLFWKVYKRLEDVLDSFADRISRPRLFLTDKLQIALAGGLGHGVAHAVFFCLSLLTPAFGPATFYVERCSKVPFFLISAIIALAFVTIHTFSMVIAFEGYAKGNKVDQIIVPVIHLTAGMLTLVNFASEGCVIGVPLLYLVASLTLVHCGKMVWQRLLESRNQSSASR.

Transmembrane regions (helical) follow at residues 5 to 25 (AGIG…VSVI), 29 to 49 (PFLI…LIIL), 57 to 77 (LPLK…SVCF), 116 to 136 (IALA…CLSL), 157 to 177 (FLIS…SMVI), 191 to 211 (IIVP…FASE), and 212 to 232 (GCVI…VHCG).

This sequence belongs to the APH-1 family. In terms of assembly, probable component of the gamma-secretase complex, a complex composed of a presenilin homodimer, nicastrin, APH1 and PEN2.

It is found in the membrane. Its function is as follows. Probable subunit of the gamma-secretase complex, an endoprotease complex that catalyzes the intramembrane cleavage of integral proteins such as Notch receptors. This Arabidopsis thaliana (Mouse-ear cress) protein is Gamma-secretase subunit APH1-like.